The sequence spans 126 residues: UPF0102 protein BCAN_A0183 (126 aa).

It belongs to the UPF0102 family.

This Brucella canis (strain ATCC 23365 / NCTC 10854 / RM-666) protein is UPF0102 protein BCAN_A0183.